The following is a 984-amino-acid chain: Serine/threonine-protein kinase Nek9 (984 aa).

An N-acetylserine modification is found at Ser-2. Phosphoserine is present on residues Ser-2, Ser-13, Ser-16, and Ser-20. The segment at 14–43 (INSDFGSESGGGGDSGPGPSAVPGPRAGGG) is disordered. Position 52 is a phosphotyrosine (Tyr-52). The Protein kinase domain occupies 52–308 (YIPIRVLGRG…ADALLDLPLL (257 aa)). 58-66 (LGRGAFGEA) is a binding site for ATP. Position 76 is a phosphoserine (Ser-76). Residue Lys-81 participates in ATP binding. Residue Asp-176 is the Proton acceptor of the active site. Thr-210 is subject to Phosphothreonine; by autocatalysis. At Thr-254 the chain carries Phosphothreonine. Ser-331 carries the post-translational modification Phosphoserine. Phosphothreonine is present on Thr-333. 6 RCC1 repeats span residues 388–444 (KELY…VTDE), 445–498 (GQLY…LTRN), 499–550 (KEVY…LTQS), 551–615 (GKVL…IDER), 616–668 (GRLL…ATDD), and 669–726 (NHIF…IVEK). The tract at residues 732-896 (TIRSNSSGLS…GKALTSAACA (165 aa)) is interaction with NEK6. Ser-741 is modified (phosphoserine). Positions 744–790 (TVVQSSSPGGGIGGGGGGGGGGGGEEEDSQQESETPDPSGGFRGTME) are disordered. Positions 751–766 (PGGGIGGGGGGGGGGG) are enriched in gly residues. Acidic residues predominate over residues 767-778 (GEEEDSQQESET). Phosphoserine occurs at positions 808 and 839. The residue at position 891 (Thr-891) is a Phosphothreonine. Positions 896–945 (ACSALQVEVDRLQALVLKCLEEQQKLQQENLQMFTQLQKLNKKLEGGQQV) form a coiled coil. The disordered stretch occupies residues 940-984 (EGGQQVGMHSRGTQTAKEEMEMDPKPDLDSESWCLLGTDSCRPSL). Position 949 is a phosphoserine (Ser-949). Residues 955–967 (AKEEMEMDPKPDL) are compositionally biased toward basic and acidic residues. Ser-983 carries the post-translational modification Phosphoserine.

This sequence belongs to the protein kinase superfamily. NEK Ser/Thr protein kinase family. NIMA subfamily. In terms of assembly, homodimer; homodimerization is required to activate NEK7. Binds to Ran GTPase. Has a greater affinity for Ran-GDP over Ran-GTP. Interacts with SSRP1 and SUPT16H, the 2 subunits of the FACT complex. Interacts with DYNLL1; phosphorylation at Ser-949 strongly reduces DYNLL1 binding. Mg(2+) is required as a cofactor. Post-translationally, autophosphorylated on serine and threonine residues. When complexed with FACT, exhibits markedly elevated phosphorylation on Thr-210. During mitosis, not phosphorylated on Thr-210. Phosphorylated by CDK1 in vitro.

It is found in the cytoplasm. It localises to the nucleus. It catalyses the reaction L-seryl-[protein] + ATP = O-phospho-L-seryl-[protein] + ADP + H(+). It carries out the reaction L-threonyl-[protein] + ATP = O-phospho-L-threonyl-[protein] + ADP + H(+). With respect to regulation, activated during mitosis by intramolecular autophosphorylation. Activity and autophosphorylation is activated by manganese &gt;&gt; magnesium ions. It is not cell-cycle regulated but activity is higher in G0-arrested cells. Functionally, pleiotropic regulator of mitotic progression, participating in the control of spindle dynamics and chromosome separation. Phosphorylates different histones, myelin basic protein, beta-casein, and BICD2. Phosphorylates histone H3 on serine and threonine residues and beta-casein on serine residues. Important for G1/S transition and S phase progression. Phosphorylates NEK6 and NEK7 and stimulates their activity by releasing the autoinhibitory functions of Tyr-108 and Tyr-97 respectively. This chain is Serine/threonine-protein kinase Nek9, found in Mus musculus (Mouse).